A 245-amino-acid polypeptide reads, in one-letter code: Orotidine 5'-phosphate decarboxylase (245 aa).

Residues D22, K44, 71-80, T131, R192, Q201, G221, and R222 each bind substrate; that span reads DLKFHDIPNT. The active-site Proton donor is K73.

It belongs to the OMP decarboxylase family. Type 1 subfamily. As to quaternary structure, homodimer.

It carries out the reaction orotidine 5'-phosphate + H(+) = UMP + CO2. It participates in pyrimidine metabolism; UMP biosynthesis via de novo pathway; UMP from orotate: step 2/2. Functionally, catalyzes the decarboxylation of orotidine 5'-monophosphate (OMP) to uridine 5'-monophosphate (UMP). This Shigella flexneri protein is Orotidine 5'-phosphate decarboxylase.